The chain runs to 256 residues: 5-keto-4-deoxy-D-glucarate aldolase (256 aa).

Residue His-50 is the Proton acceptor of the active site. Residue Gln-151 participates in substrate binding. Mg(2+) is bound at residue Glu-153. Substrate contacts are provided by Ser-178 and Asp-179. Asp-179 is a Mg(2+) binding site.

This sequence belongs to the HpcH/HpaI aldolase family. KDGluc aldolase subfamily. Homohexamer; trimer of dimers. It depends on Mg(2+) as a cofactor.

It catalyses the reaction 5-dehydro-4-deoxy-D-glucarate = 2-hydroxy-3-oxopropanoate + pyruvate. It carries out the reaction 2-dehydro-3-deoxy-D-glucarate = 2-hydroxy-3-oxopropanoate + pyruvate. The protein operates within carbohydrate acid metabolism; galactarate degradation; D-glycerate from galactarate: step 2/3. In terms of biological role, catalyzes the reversible retro-aldol cleavage of both 5-keto-4-deoxy-D-glucarate and 2-keto-3-deoxy-D-glucarate to pyruvate and tartronic semialdehyde. The polypeptide is 5-keto-4-deoxy-D-glucarate aldolase (Escherichia fergusonii (strain ATCC 35469 / DSM 13698 / CCUG 18766 / IAM 14443 / JCM 21226 / LMG 7866 / NBRC 102419 / NCTC 12128 / CDC 0568-73)).